Consider the following 282-residue polypeptide: Glycine/sarcosine N-methyltransferase (282 aa).

Polar residues predominate over residues M1–E23. Residues M1–E27 are disordered. Residues Y35, W43, R52, A76, D97, D123–W124, and L141 each bind S-adenosyl-L-methionine. N143, R176, and Y217 together coordinate substrate.

It belongs to the class I-like SAM-binding methyltransferase superfamily. Glycine N-methyltransferase family. In terms of assembly, monomer.

It catalyses the reaction glycine + 2 S-adenosyl-L-methionine = N,N-dimethylglycine + 2 S-adenosyl-L-homocysteine + 2 H(+). The enzyme catalyses glycine + S-adenosyl-L-methionine = sarcosine + S-adenosyl-L-homocysteine + H(+). It carries out the reaction sarcosine + S-adenosyl-L-methionine = N,N-dimethylglycine + S-adenosyl-L-homocysteine + H(+). The protein operates within amine and polyamine biosynthesis; betaine biosynthesis via glycine pathway; betaine from glycine: step 1/3. It participates in amine and polyamine biosynthesis; betaine biosynthesis via glycine pathway; betaine from glycine: step 2/3. Catalyzes the methylation of glycine and sarcosine to sarcosine and dimethylglycine, respectively, with S-adenosylmethionine (AdoMet) acting as the methyl donor. It has strict specificity for glycine and sarcosine as the methyl group acceptors. This is Glycine/sarcosine N-methyltransferase from Parasynechococcus marenigrum (strain WH8102).